The chain runs to 123 residues: uncharacterized protein (123 aa).

The N-terminal stretch at 1–19 (MKIKYFFIPLFSSAILFSA) is a signal peptide. A lipid anchor (N-palmitoyl cysteine) is attached at cysteine 20. Cysteine 20 carries S-diacylglycerol cysteine lipidation.

This sequence belongs to the MG439/MG440 family.

Its subcellular location is the cell membrane. This is an uncharacterized protein from Mycoplasma pneumoniae (strain ATCC 29342 / M129 / Subtype 1) (Mycoplasmoides pneumoniae).